We begin with the raw amino-acid sequence, 248 residues long: Probable transcriptional regulatory protein ECH_0704 (248 aa).

Residues 1 to 21 (MAGHSQFANIKHRKGAQDAKR) form a disordered region.

It belongs to the TACO1 family.

Its subcellular location is the cytoplasm. This is Probable transcriptional regulatory protein ECH_0704 from Ehrlichia chaffeensis (strain ATCC CRL-10679 / Arkansas).